The chain runs to 355 residues: Ubiquinone biosynthesis protein COQ4 homolog, mitochondrial (355 aa).

Zn(2+)-binding residues include H134, D135, H138, and E150.

The protein belongs to the COQ4 family. As to quaternary structure, component of a multi-subunit COQ enzyme complex. It depends on Zn(2+) as a cofactor.

Its subcellular location is the mitochondrion inner membrane. It catalyses the reaction a 4-hydroxy-3-methoxy-5-(all-trans-polyprenyl)benzoate + H(+) = a 2-methoxy-6-(all-trans-polyprenyl)phenol + CO2. It functions in the pathway cofactor biosynthesis; ubiquinone biosynthesis. In terms of biological role, lyase that catalyzes the C1-decarboxylation of 4-hydroxy-3-methoxy-5-(all-trans-polyprenyl)benzoic acid into 2-methoxy-6-(all-trans-polyprenyl)phenol during ubiquinone biosynthesis. This is Ubiquinone biosynthesis protein COQ4 homolog, mitochondrial from Plasmodium knowlesi (strain H).